Consider the following 214-residue polypeptide: MSLDELKLLEGQLLIPLEMYLAAGIRIGTKMKSKFMEPFIYSARPDGLYLLDVKKTDERIRIAAKMIARYDPSKFVVVSGRQYGHRPVRKFCGLVGCKPMLGRVLPGTFTNPALSHFTEADLMMVTDPRVDEQAVVEAGTMGIPVIALCDTDSPISNVDLIIPTNNRGRKALALIFWLLAREVLRIRGDIPPNGELPVPLSDFEARILTTGEVV.

This sequence belongs to the universal ribosomal protein uS2 family.

This Thermofilum pendens (strain DSM 2475 / Hrk 5) protein is Small ribosomal subunit protein uS2.